The chain runs to 117 residues: DNA-binding protein DDB_G0278111 (117 aa).

The interval 1-40 (MSSEKEIQQQLSQMQGQGFDPEAQQRQEAQRQEANERRQG) is disordered. Over residues 8-22 (QQQLSQMQGQGFDPE) the composition is skewed to low complexity. Residues 23 to 39 (AQQRQEAQRQEANERRQ) show a composition bias toward basic and acidic residues.

Belongs to the PDCD5 family.

The sequence is that of DNA-binding protein DDB_G0278111 from Dictyostelium discoideum (Social amoeba).